Here is a 672-residue protein sequence, read N- to C-terminus: DNA ligase (672 aa).

NAD(+)-binding positions include 32–36 (DAEYD), 81–82 (SL), and glutamate 113. Catalysis depends on lysine 115, which acts as the N6-AMP-lysine intermediate. Residues arginine 136, glutamate 173, lysine 290, and lysine 314 each contribute to the NAD(+) site. Zn(2+)-binding residues include cysteine 408, cysteine 411, cysteine 426, and cysteine 432. Residues 594–672 (EIDSPFAGKT…EAEMLRLLGE (79 aa)) enclose the BRCT domain.

This sequence belongs to the NAD-dependent DNA ligase family. LigA subfamily. Mg(2+) is required as a cofactor. Mn(2+) serves as cofactor.

The enzyme catalyses NAD(+) + (deoxyribonucleotide)n-3'-hydroxyl + 5'-phospho-(deoxyribonucleotide)m = (deoxyribonucleotide)n+m + AMP + beta-nicotinamide D-nucleotide.. DNA ligase that catalyzes the formation of phosphodiester linkages between 5'-phosphoryl and 3'-hydroxyl groups in double-stranded DNA using NAD as a coenzyme and as the energy source for the reaction. It is essential for DNA replication and repair of damaged DNA. This is DNA ligase from Cronobacter sakazakii (strain ATCC BAA-894) (Enterobacter sakazakii).